An 883-amino-acid chain; its full sequence is Receptor-like protein 40 (883 aa).

A signal peptide spans 1 to 21 (MSELLFSLNFLLLLLLSCVSP). Residues 22-846 (SSFFTFNNPV…EDEQVLNWKA (825 aa)) are Extracellular-facing. Residues asparagine 58, asparagine 91, and asparagine 109 are each glycosylated (N-linked (GlcNAc...) asparagine). LRR repeat units follow at residues 97-121 (FHHL…KFGM) and 122-143 (LNNL…PFSF). Residue asparagine 145 is glycosylated (N-linked (GlcNAc...) asparagine). 14 LRR repeats span residues 146–169 (LSML…ARNL), 170–195 (RKLR…LFEL), 197–219 (HIIY…EFGN), 220–244 (LNKL…ISNL), 246–267 (QLTE…VQNL), 268–291 (TKLS…LFTM), 293–316 (FLSY…SSSS), 317–340 (SRLE…ISKL), 342–364 (NLKE…LFSS), 365–390 (LKSL…SYIP), 391–412 (STLE…VFKT), 413–437 (LHNL…LWSL), 439–462 (RLSS…VLVN), and 463–486 (SSVQ…PLSI). Asparagine 189, asparagine 207, asparagine 243, and asparagine 266 each carry an N-linked (GlcNAc...) asparagine glycan. N-linked (GlcNAc...) asparagine glycans are attached at residues asparagine 305 and asparagine 312. Residue asparagine 352 is glycosylated (N-linked (GlcNAc...) asparagine). N-linked (GlcNAc...) asparagine glycosylation is present at asparagine 462. The stretch at 487-506 (NYFSAIDNRFGGDIPLSICN) is one LRR 17; degenerate repeat. Asparagine 506 and asparagine 519 each carry an N-linked (GlcNAc...) asparagine glycan. 10 LRR repeats span residues 507–528 (RSSL…PPCL), 529–552 (SNLL…YYED), 554–576 (PLRS…LINC), 578–600 (ALQF…LKAL), 601–624 (PKLQ…NEGP), 627–651 (FPEL…FFVN), 701–724 (TSSA…IGLL), 725–747 (KALI…SFAN), 748–772 (LKKM…LRTL), and 774–797 (FLAY…QITG). N-linked (GlcNAc...) asparagine glycosylation occurs at asparagine 575. Residue asparagine 731 is glycosylated (N-linked (GlcNAc...) asparagine). Asparagine 779 carries an N-linked (GlcNAc...) asparagine glycan. The chain crosses the membrane as a helical span at residues 847–867 (VAIGYGIGVLLGLAIAQLISL). The Cytoplasmic portion of the chain corresponds to 868-883 (YKPKWLASLVIKSRNC).

The protein belongs to the RLP family.

The protein resides in the cell membrane. The polypeptide is Receptor-like protein 40 (Arabidopsis thaliana (Mouse-ear cress)).